A 170-amino-acid chain; its full sequence is RNA pyrophosphohydrolase (170 aa).

One can recognise a Nudix hydrolase domain in the interval 6–149; that stretch reads GFRPNVGIIL…KRDVYRRALK (144 aa). The Nudix box signature appears at 39–60; the sequence is GGIKHNESPENALYRELEEEVG.

It belongs to the Nudix hydrolase family. RppH subfamily. A divalent metal cation is required as a cofactor.

Accelerates the degradation of transcripts by removing pyrophosphate from the 5'-end of triphosphorylated RNA, leading to a more labile monophosphorylated state that can stimulate subsequent ribonuclease cleavage. This chain is RNA pyrophosphohydrolase, found in Saccharophagus degradans (strain 2-40 / ATCC 43961 / DSM 17024).